We begin with the raw amino-acid sequence, 878 residues long: Probable outer membrane protein PmpI (878 aa).

Residues 1-24 (MRPDHMNFCCLCAAILSSTAVLFG) form the signal peptide. A compositionally biased stretch (low complexity) spans 360–371 (SSKESPLPSSLQ). The interval 360-381 (SSKESPLPSSLQASVTSPTPAT) is disordered. Positions 372 to 381 (ASVTSPTPAT) are enriched in polar residues. Positions 602–878 (GGAYLFGTWG…SLDLGTTYRF (277 aa)) constitute an Autotransporter domain.

It belongs to the PMP outer membrane protein family.

It localises to the secreted. The protein resides in the cell wall. It is found in the cell outer membrane. The protein is Probable outer membrane protein PmpI (pmpI) of Chlamydia trachomatis serovar D (strain ATCC VR-885 / DSM 19411 / UW-3/Cx).